The primary structure comprises 635 residues: ATP-binding protein Uup (635 aa).

ABC transporter domains are found at residues 1 to 253 (MSLI…RVEE) and 320 to 546 (FEME…KTEE). ATP is bound by residues 36 to 43 (GRNGAGKS) and 352 to 359 (GPNGCGKT). Residues 551 to 635 (KAETVKRSSS…EYLEALKNGG (85 aa)) are C-terminal domain (CTD), binds DNA, required to complement a deletion mutant. Residues 563 to 631 (SYKLQRELEQ…FERWEYLEAL (69 aa)) adopt a coiled-coil conformation.

It belongs to the ABC transporter superfamily. ABCF family. Uup subfamily.

Its subcellular location is the cytoplasm. It carries out the reaction ATP + H2O = ADP + phosphate + H(+). With respect to regulation, ATPase activity inhibited by N-ethylmaleimide but not by vanadate. Its function is as follows. Probably plays a role in ribosome assembly or function; overexpression suppresses cold-sensitive growth of a bipA deletion. May be involved in resolution of branched DNA intermediates that result from template switching in postreplication gaps. Binds DNA at Holliday junctions. May be involved in the correct segregation of nucleoids. Has ATPase activity, binds DNA non-sequence specifically; the presence of DNA does not change the ATPase activity. Mutations in this gene cause an increase in RecA-independent precise excision of transposons and insertion elements, and also reduce bacteriophage Mu growth. Genetic interactions among priB, dam, lexA, nagC, polA, rdgB, rdgB, rep and uup link the PriA-PriB replication restart pathway to DNA double-strand break repair. The sequence is that of ATP-binding protein Uup from Escherichia coli (strain K12).